A 523-amino-acid chain; its full sequence is Bifunctional purine biosynthesis protein PurH (523 aa).

The MGS-like domain maps to 1–149 (MSDPVIKRAL…KNNESVTVIT (149 aa)).

It belongs to the PurH family.

The catalysed reaction is (6R)-10-formyltetrahydrofolate + 5-amino-1-(5-phospho-beta-D-ribosyl)imidazole-4-carboxamide = 5-formamido-1-(5-phospho-D-ribosyl)imidazole-4-carboxamide + (6S)-5,6,7,8-tetrahydrofolate. It carries out the reaction IMP + H2O = 5-formamido-1-(5-phospho-D-ribosyl)imidazole-4-carboxamide. The protein operates within purine metabolism; IMP biosynthesis via de novo pathway; 5-formamido-1-(5-phospho-D-ribosyl)imidazole-4-carboxamide from 5-amino-1-(5-phospho-D-ribosyl)imidazole-4-carboxamide (10-formyl THF route): step 1/1. Its pathway is purine metabolism; IMP biosynthesis via de novo pathway; IMP from 5-formamido-1-(5-phospho-D-ribosyl)imidazole-4-carboxamide: step 1/1. The chain is Bifunctional purine biosynthesis protein PurH from Chlorobaculum parvum (strain DSM 263 / NCIMB 8327) (Chlorobium vibrioforme subsp. thiosulfatophilum).